A 408-amino-acid chain; its full sequence is Glutamate N-acetyltransferase (408 aa).

Residues T150, K176, T189, E271, N403, and T408 each contribute to the substrate site. T189 acts as the Nucleophile in catalysis.

Belongs to the ArgJ family. Heterotetramer of two alpha and two beta chains.

The protein resides in the cytoplasm. The catalysed reaction is N(2)-acetyl-L-ornithine + L-glutamate = N-acetyl-L-glutamate + L-ornithine. Its pathway is amino-acid biosynthesis; L-arginine biosynthesis; L-ornithine and N-acetyl-L-glutamate from L-glutamate and N(2)-acetyl-L-ornithine (cyclic): step 1/1. Functionally, catalyzes the transfer of the acetyl group from N(2)-acetylornithine to glutamate, forming N-acetylglutamate and L-ornithine. This Methanococcus maripaludis (strain C7 / ATCC BAA-1331) protein is Glutamate N-acetyltransferase.